Here is a 176-residue protein sequence, read N- to C-terminus: Late lactation protein (176 aa).

A signal peptide spans 1–18; that stretch reads MKVLFFTIALSLFSILHA. Residues C78 and C171 are joined by a disulfide bond.

This sequence belongs to the calycin superfamily. Lipocalin family. As to expression, mammary gland. Secreted in milk.

Its subcellular location is the secreted. Its function is as follows. Probably serves a role in the transport of a small ligand released during the hydrolysis of milk fat. This chain is Late lactation protein, found in Trichosurus vulpecula (Brush-tailed possum).